The primary structure comprises 419 residues: eIF5-mimic protein 2 (419 aa).

M1 is subject to N-acetylmethionine. A compositionally biased stretch (polar residues) spans 1–15 (MNNQKQQKPTLSGQR). Residues 1-26 (MNNQKQQKPTLSGQRFKTRKRDEKER) form a disordered region. S12 is modified (phosphoserine). The 168-residue stretch at 247–414 (NQQTIGARKE…KNAEEESESE (168 aa)) folds into the W2 domain. Residue K368 forms a Glycyl lysine isopeptide (Lys-Gly) (interchain with G-Cter in SUMO2) linkage. 2 positions are modified to phosphoserine: S411 and S413.

The protein belongs to the BZW family.

In terms of biological role, translation initiation regulator which represses repeat-associated non-AUG (RAN) initiated translation probably by acting as a competitive inhibitor of eukaryotic translation initiation factor 5 (EIF5) function. Enhances histone H4 gene transcription but does not seem to bind DNA directly. The sequence is that of eIF5-mimic protein 2 (BZW1) from Pongo abelii (Sumatran orangutan).